The sequence spans 90 residues: Protein PRAC2 (90 aa).

As to expression, highly expressed in prostate and testis. Also detected in placenta, muscle, colon, peripheral blood leukocytes and skin.

It is found in the nucleus. This is Protein PRAC2 from Homo sapiens (Human).